The chain runs to 397 residues: NADH-quinone oxidoreductase subunit H 1 (397 aa).

The next 10 helical transmembrane spans lie at 7–27, 84–104, 120–140, 156–176, 198–218, 258–278, 279–299, 313–333, 337–357, and 376–396; these read FIFISLVKAAVIFGVLMTTLA, PFLAITMALLSISVIPFGPVI, IGVLFILAVSSMGVYGIALAG, SAQMISYELPMSLAIAAPLLI, LLSGPFPQVISFIIFIIAAFA, MITVSAMATLLFLGGWMAPWP, AAYGSSLVPSILFGISGLVLL, TFPAFGIIFLGIAGIFLLPMV, LLPLFWFCAKTGAILFAFMWI, and FLFPVAMLNLLVTGFLVAWTT.

This sequence belongs to the complex I subunit 1 family. In terms of assembly, NDH-1 is composed of 14 different subunits. Subunits NuoA, H, J, K, L, M, N constitute the membrane sector of the complex.

It localises to the cell inner membrane. The catalysed reaction is a quinone + NADH + 5 H(+)(in) = a quinol + NAD(+) + 4 H(+)(out). Its function is as follows. NDH-1 shuttles electrons from NADH, via FMN and iron-sulfur (Fe-S) centers, to quinones in the respiratory chain. The immediate electron acceptor for the enzyme in this species is believed to be ubiquinone. Couples the redox reaction to proton translocation (for every two electrons transferred, four hydrogen ions are translocated across the cytoplasmic membrane), and thus conserves the redox energy in a proton gradient. This subunit may bind ubiquinone. The chain is NADH-quinone oxidoreductase subunit H 1 from Solibacter usitatus (strain Ellin6076).